A 45-amino-acid polypeptide reads, in one-letter code: Large ribosomal subunit protein bL36 (45 aa).

A disordered region spans residues 1–45 (MKVSSSIKADPSKGDKLVRRKGRLYVINKKDPNRKQRQAGPARKK).

Belongs to the bacterial ribosomal protein bL36 family.

This Chlamydia caviae (strain ATCC VR-813 / DSM 19441 / 03DC25 / GPIC) (Chlamydophila caviae) protein is Large ribosomal subunit protein bL36.